A 208-amino-acid chain; its full sequence is Holliday junction branch migration complex subunit RuvA (208 aa).

A domain I region spans residues 1 to 69 (MIGFLQGYVV…EDQMVLFGFA (69 aa)). The domain II stretch occupies residues 70–148 (VVAERDLFRQ…EWRDQAGLKT (79 aa)). Residues 149–159 (LPSAGPIDSVQ) are flexible linker. The interval 159 to 208 (QEDVEMTLLALGYTSQEVMRALQAVGQNTALAKNSDTEAWIREAIAWLSQ) is domain III.

It belongs to the RuvA family. As to quaternary structure, homotetramer. Forms an RuvA(8)-RuvB(12)-Holliday junction (HJ) complex. HJ DNA is sandwiched between 2 RuvA tetramers; dsDNA enters through RuvA and exits via RuvB. An RuvB hexamer assembles on each DNA strand where it exits the tetramer. Each RuvB hexamer is contacted by two RuvA subunits (via domain III) on 2 adjacent RuvB subunits; this complex drives branch migration. In the full resolvosome a probable DNA-RuvA(4)-RuvB(12)-RuvC(2) complex forms which resolves the HJ.

It is found in the cytoplasm. In terms of biological role, the RuvA-RuvB-RuvC complex processes Holliday junction (HJ) DNA during genetic recombination and DNA repair, while the RuvA-RuvB complex plays an important role in the rescue of blocked DNA replication forks via replication fork reversal (RFR). RuvA specifically binds to HJ cruciform DNA, conferring on it an open structure. The RuvB hexamer acts as an ATP-dependent pump, pulling dsDNA into and through the RuvAB complex. HJ branch migration allows RuvC to scan DNA until it finds its consensus sequence, where it cleaves and resolves the cruciform DNA. The polypeptide is Holliday junction branch migration complex subunit RuvA (Acaryochloris marina (strain MBIC 11017)).